A 254-amino-acid polypeptide reads, in one-letter code: DNA repair protein RecO (254 aa).

It belongs to the RecO family.

Involved in DNA repair and RecF pathway recombination. The chain is DNA repair protein RecO from Anaeromyxobacter dehalogenans (strain 2CP-C).